The sequence spans 702 residues: Arginine decarboxylase 1 (702 aa).

Residue K151 is modified to N6-(pyridoxal phosphate)lysine. 336-346 (IDVGGGLGIDY) provides a ligand contact to substrate. Low complexity predominate over residues 668-686 (ASGESSGMSSDSEGSAAGA). The segment at 668–702 (ASGESSGMSSDSEGSAAGAAEEDDDEWEFMRGLTV) is disordered.

The protein belongs to the Orn/Lys/Arg decarboxylase class-II family. SpeA subfamily. Pyridoxal 5'-phosphate is required as a cofactor. It depends on Mg(2+) as a cofactor. In terms of tissue distribution, expressed in roots, leaves and stems (at protein level).

It carries out the reaction L-arginine + H(+) = agmatine + CO2. Its pathway is amine and polyamine biosynthesis; agmatine biosynthesis; agmatine from L-arginine: step 1/1. The protein is Arginine decarboxylase 1 (ADC1) of Oryza sativa subsp. japonica (Rice).